The chain runs to 207 residues: Outer-membrane lipoprotein LolB (207 aa).

Residues 1 to 21 form the signal peptide; sequence MPLPDFRLIRLLPLAALVLTA. Cysteine 22 carries the N-palmitoyl cysteine lipid modification. Residue cysteine 22 is the site of S-diacylglycerol cysteine attachment.

It belongs to the LolB family. In terms of assembly, monomer.

The protein resides in the cell outer membrane. In terms of biological role, plays a critical role in the incorporation of lipoproteins in the outer membrane after they are released by the LolA protein. The sequence is that of Outer-membrane lipoprotein LolB from Escherichia coli (strain K12 / MC4100 / BW2952).